Consider the following 122-residue polypeptide: Large ribosomal subunit protein uL18 (122 aa).

Belongs to the universal ribosomal protein uL18 family. As to quaternary structure, part of the 50S ribosomal subunit; part of the 5S rRNA/L5/L18/L25 subcomplex. Contacts the 5S and 23S rRNAs.

Functionally, this is one of the proteins that bind and probably mediate the attachment of the 5S RNA into the large ribosomal subunit, where it forms part of the central protuberance. The protein is Large ribosomal subunit protein uL18 of Pseudothermotoga lettingae (strain ATCC BAA-301 / DSM 14385 / NBRC 107922 / TMO) (Thermotoga lettingae).